The sequence spans 208 residues: Imidazoleglycerol-phosphate dehydratase (208 aa).

Positions 1-22 are disordered; sequence MTEDTETSSTGAGADDRTAAIS.

Belongs to the imidazoleglycerol-phosphate dehydratase family.

Its subcellular location is the cytoplasm. The catalysed reaction is D-erythro-1-(imidazol-4-yl)glycerol 3-phosphate = 3-(imidazol-4-yl)-2-oxopropyl phosphate + H2O. It participates in amino-acid biosynthesis; L-histidine biosynthesis; L-histidine from 5-phospho-alpha-D-ribose 1-diphosphate: step 6/9. This Haloquadratum walsbyi (strain DSM 16790 / HBSQ001) protein is Imidazoleglycerol-phosphate dehydratase.